The following is a 201-amino-acid chain: Small ribosomal subunit protein uS4c (201 aa).

In terms of domain architecture, S4 RNA-binding spans 89–152 (MRLDNILFRL…NSRTLVQNLL (64 aa)).

The protein belongs to the universal ribosomal protein uS4 family. In terms of assembly, part of the 30S ribosomal subunit. Contacts protein S5. The interaction surface between S4 and S5 is involved in control of translational fidelity.

It is found in the plastid. It localises to the chloroplast. Its function is as follows. One of the primary rRNA binding proteins, it binds directly to 16S rRNA where it nucleates assembly of the body of the 30S subunit. Functionally, with S5 and S12 plays an important role in translational accuracy. The polypeptide is Small ribosomal subunit protein uS4c (rps4) (Arabidopsis thaliana (Mouse-ear cress)).